Consider the following 1612-residue polypeptide: Roundabout homolog 1 (1612 aa).

The N-terminal stretch at 1-19 is a signal peptide; it reads MIAEPAHFYLFGLICLCSG. Topologically, residues 20 to 858 are extracellular; the sequence is SRLRQEDFPP…QQISDVVRQP (839 aa). 5 consecutive Ig-like C2-type domains span residues 29-125, 131-218, 223-307, 312-407, and 416-502; these read PRIV…ASLE, DDFR…AELT, PSFV…ATLT, PHFV…LEVT, and PVIR…AYIE. An intrachain disulfide couples cysteine 50 to cysteine 108. N-linked (GlcNAc...) asparagine glycosylation occurs at asparagine 121. Intrachain disulfides connect cysteine 152–cysteine 201, cysteine 244–cysteine 291, and cysteine 333–cysteine 389. A glycan (N-linked (GlcNAc...) asparagine) is linked at asparagine 424. Cysteine 437 and cysteine 486 are oxidised to a cystine. Fibronectin type-III domains lie at 524–618, 637–734, and 739–835; these read APSK…TQDV, VVLH…TLEE, and PPRS…LDSH. Asparagine 751, asparagine 781, and asparagine 788 each carry an N-linked (GlcNAc...) asparagine glycan. Residues 859-879 traverse the membrane as a helical segment; it reads AFIAGIGAACWIILMVFSIWL. Topologically, residues 880–1612 are cytoplasmic; the sequence is YRHRKKRNGL…NNEELEETES (733 aa). Serine 901 carries the phosphoserine modification. The residue at position 909 (threonine 909) is a Phosphothreonine. The residue at position 999 (tyrosine 999) is a Phosphotyrosine. Serine 1016 bears the Phosphoserine mark. Tyrosine 1034 is modified (phosphotyrosine). The segment at 1045 to 1068 is disordered; sequence SNNMNNGAGDSSEKHWKPPGQQKP. A Phosphotyrosine modification is found at tyrosine 1075. 3 disordered regions span residues 1088 to 1298, 1313 to 1358, and 1381 to 1612; these read RAND…ADME, EQTP…DGSF, and RRQM…ETES. Polar residues predominate over residues 1098 to 1107; it reads PYNQSYDQNT. Residues 1108–1124 show a composition bias toward low complexity; sequence GGSYNSSDRGSSTSGSQ. Pro residues predominate over residues 1147–1157; the sequence is LPPPPAHPPPH. At threonine 1201 the chain carries Phosphothreonine. Over residues 1216 to 1230 the composition is skewed to polar residues; sequence YSHQSTATLTPSPQE. Residues 1242–1254 show a composition bias toward basic and acidic residues; it reads DLGHMPHPPDRRR. The span at 1257–1268 shows a compositional bias: pro residues; it reads VSPPPPPRPISP. Serine 1258 bears the Phosphoserine mark. Acidic residues predominate over residues 1283 to 1297; it reads MDTDAPEEEEDEADM. Over residues 1345 to 1358 the composition is skewed to low complexity; that stretch reads SSGRSSVSSSDGSF. Over residues 1399-1412 the composition is skewed to polar residues; that stretch reads PRPTSPVSTDSNMS. A compositionally biased stretch (basic residues) spans 1420–1431; the sequence is RPAKKQKHQPGH. The segment covering 1441 to 1451 has biased composition (pro residues); it reads LPPPPVPPPAI. Composition is skewed to basic and acidic residues over residues 1477-1502 and 1510-1534; these read ARTD…RQVT and DPRE…RDLP. Positions 1553–1562 are enriched in polar residues; it reads FPTSNNPRDP. Residues 1563–1575 show a composition bias toward low complexity; that stretch reads SSSSSMSSRGSGS. Positions 1603–1612 are enriched in acidic residues; that stretch reads NNEELEETES.

Belongs to the immunoglobulin superfamily. ROBO family. In terms of assembly, homodimer. Dimerization is mediated by the extracellular domain and is independent of SLIT liganding. Interacts with SLIT1 Interacts with SLIT2. Interacts with FLRT3. Interacts with MYO9B (via Rho-GAP domain). In terms of processing, ubiquitinated. May be deubiquitinated by USP33. As to expression, detected in embryonic thalamus neurons (at protein level). Expressed in embryonal spinal cord. Expressed in embryonal lung, and in adult lung bronchial epithelial cells of large proximal airways.

Its subcellular location is the cell membrane. The protein resides in the cell projection. The protein localises to the axon. It is found in the endoplasmic reticulum-Golgi intermediate compartment membrane. Functionally, receptor for SLIT1 and SLIT2 that mediates cellular responses to molecular guidance cues in cellular migration, including axonal navigation at the ventral midline of the neural tube and projection of axons to different regions during neuronal development. Interaction with the intracellular domain of FLRT3 mediates axon attraction towards cells expressing NTN1. In axon growth cones, the silencing of the attractive effect of NTN1 by SLIT2 may require the formation of a ROBO1-DCC complex. Plays a role in the regulation of cell migration via its interaction with MYO9B; inhibits MYO9B-mediated stimulation of RHOA GTPase activity, and thereby leads to increased levels of active, GTP-bound RHOA. May be required for lung development. This Mus musculus (Mouse) protein is Roundabout homolog 1 (Robo1).